Here is a 42-residue protein sequence, read N- to C-terminus: Tachystatin-B1 (42 aa).

3 disulfides stabilise this stretch: Cys4-Cys20, Cys11-Cys25, and Cys19-Cys37.

In terms of tissue distribution, granular hemocytes, small secretory granules.

Its subcellular location is the secreted. In terms of biological role, exhibits stronger antimicrobial activity against the Gram-positive bacteria (S.aureus (IC(50) is 7.4 ug/ml)) and fungi (C.albicans (IC(50) is 3.0 ug/ml) and P.pastoris (IC(50) is 0.1 ug/ml)) than Gram-negative bacteria (E.coli no inhibition at 100 ug/ml). Binds to chitin (4.3 uM are required to obtain 50% of binding). Does not cause hemolysis on sheep erythrocytes. Has no blocking activity on the P-type calcium channel. In Tachypleus tridentatus (Japanese horseshoe crab), this protein is Tachystatin-B1.